Reading from the N-terminus, the 61-residue chain is Early E3 6.4 kDa protein (61 aa).

Residues 1 to 25 (MGNAGPLKLHTITKPGTIPYPPHGS) are disordered.

This is Early E3 6.4 kDa protein from Homo sapiens (Human).